Consider the following 185-residue polypeptide: Male-enhanced antigen 1 (185 aa).

Disordered regions lie at residues 1-90 (MGPE…VGDG) and 104-134 (GLHL…IPMD). 2 stretches are compositionally biased toward acidic residues: residues 50 to 60 (SSEEPEEEQEE) and 112 to 121 (LESEDEDEEG). Position 114 is a phosphoserine (Ser114).

As to expression, highly expressed in testis.

In terms of biological role, may play an important role in spermatogenesis and/or testis development. The chain is Male-enhanced antigen 1 (MEA1) from Homo sapiens (Human).